A 71-amino-acid polypeptide reads, in one-letter code: Movement protein TGBp3 (71 aa).

Residues 1–3 (MEA) are Lumenal-facing. A helical transmembrane segment spans residues 4-26 (GAYLNAIIFVLVATIIAVISVGL). The Cytoplasmic portion of the chain corresponds to 27-71 (TQTEPCTIRITGESITVHACHLDSETIKALATLKPLSLERLSFHQ).

This sequence belongs to the Tymovirales TGBp3 protein family.

It is found in the host endoplasmic reticulum membrane. Functionally, plays a role in viral cell-to-cell propagation, by facilitating genome transport to neighboring plant cells through plasmosdesmata. May induce the formation of granular vesicles derived from the Endoplasmic reticulum, which align on actin filaments. In Brassica campestris (Field mustard), this protein is Movement protein TGBp3.